Here is a 122-residue protein sequence, read N- to C-terminus: Large ribosomal subunit protein uL14c (122 aa).

It belongs to the universal ribosomal protein uL14 family. Part of the 50S ribosomal subunit.

The protein localises to the plastid. Its subcellular location is the chloroplast. Functionally, binds to 23S rRNA. In Pinus koraiensis (Korean pine), this protein is Large ribosomal subunit protein uL14c.